The following is a 417-amino-acid chain: NADH-quinone oxidoreductase subunit D (417 aa).

The protein belongs to the complex I 49 kDa subunit family. As to quaternary structure, NDH-1 is composed of 14 different subunits. Subunits NuoB, C, D, E, F, and G constitute the peripheral sector of the complex.

It is found in the cell inner membrane. The catalysed reaction is a quinone + NADH + 5 H(+)(in) = a quinol + NAD(+) + 4 H(+)(out). Its function is as follows. NDH-1 shuttles electrons from NADH, via FMN and iron-sulfur (Fe-S) centers, to quinones in the respiratory chain. The immediate electron acceptor for the enzyme in this species is believed to be ubiquinone. Couples the redox reaction to proton translocation (for every two electrons transferred, four hydrogen ions are translocated across the cytoplasmic membrane), and thus conserves the redox energy in a proton gradient. The sequence is that of NADH-quinone oxidoreductase subunit D from Ralstonia pickettii (strain 12J).